We begin with the raw amino-acid sequence, 258 residues long: 14-3-3-like protein 16R (258 aa).

The interval 238–258 (DMQDDGTDEIKEAAPKPDNNE) is disordered. Over residues 245-258 (DEIKEAAPKPDNNE) the composition is skewed to basic and acidic residues.

This sequence belongs to the 14-3-3 family.

In Solanum tuberosum (Potato), this protein is 14-3-3-like protein 16R.